The primary structure comprises 64 residues: Small ribosomal subunit protein bS21 (64 aa).

The interval 42–64 (KKEKEKAAAKKRNKYNKRRSFYY) is disordered. The segment covering 50-64 (AKKRNKYNKRRSFYY) has biased composition (basic residues).

This sequence belongs to the bacterial ribosomal protein bS21 family.

This chain is Small ribosomal subunit protein bS21, found in Malacoplasma penetrans (strain HF-2) (Mycoplasma penetrans).